Consider the following 421-residue polypeptide: Gamma-glutamyl phosphate reductase (421 aa).

The protein belongs to the gamma-glutamyl phosphate reductase family.

It localises to the cytoplasm. It catalyses the reaction L-glutamate 5-semialdehyde + phosphate + NADP(+) = L-glutamyl 5-phosphate + NADPH + H(+). It participates in amino-acid biosynthesis; L-proline biosynthesis; L-glutamate 5-semialdehyde from L-glutamate: step 2/2. Its function is as follows. Catalyzes the NADPH-dependent reduction of L-glutamate 5-phosphate into L-glutamate 5-semialdehyde and phosphate. The product spontaneously undergoes cyclization to form 1-pyrroline-5-carboxylate. The protein is Gamma-glutamyl phosphate reductase of Pseudomonas fluorescens (strain SBW25).